The chain runs to 426 residues: 4-hydroxy-3-methylbut-2-en-1-yl diphosphate synthase (flavodoxin) (426 aa).

Residues Cys320, Cys323, Cys366, and Glu373 each contribute to the [4Fe-4S] cluster site.

Belongs to the IspG family. The cofactor is [4Fe-4S] cluster.

The catalysed reaction is (2E)-4-hydroxy-3-methylbut-2-enyl diphosphate + oxidized [flavodoxin] + H2O + 2 H(+) = 2-C-methyl-D-erythritol 2,4-cyclic diphosphate + reduced [flavodoxin]. It participates in isoprenoid biosynthesis; isopentenyl diphosphate biosynthesis via DXP pathway; isopentenyl diphosphate from 1-deoxy-D-xylulose 5-phosphate: step 5/6. Functionally, converts 2C-methyl-D-erythritol 2,4-cyclodiphosphate (ME-2,4cPP) into 1-hydroxy-2-methyl-2-(E)-butenyl 4-diphosphate. The chain is 4-hydroxy-3-methylbut-2-en-1-yl diphosphate synthase (flavodoxin) from Wolbachia sp. subsp. Drosophila simulans (strain wRi).